We begin with the raw amino-acid sequence, 172 residues long: Large ribosomal subunit protein uL10 (172 aa).

Belongs to the universal ribosomal protein uL10 family. Part of the ribosomal stalk of the 50S ribosomal subunit. The N-terminus interacts with L11 and the large rRNA to form the base of the stalk. The C-terminus forms an elongated spine to which L12 dimers bind in a sequential fashion forming a multimeric L10(L12)X complex.

Forms part of the ribosomal stalk, playing a central role in the interaction of the ribosome with GTP-bound translation factors. The chain is Large ribosomal subunit protein uL10 (rplJ) from Brucella abortus biovar 1 (strain 9-941).